The following is a 1724-amino-acid chain: Protein mono-ADP-ribosyltransferase PARP4 (1724 aa).

The BRCT domain maps to 1-94; it reads MVMGIFANCI…RLLDVKNYDP (94 aa). A Nuclear localization signal motif is present at residues 19–25; sequence PQQQKKK. The segment at 97 to 123 is disordered; sequence PLDITPPPDQKASSSEVKTEGLCPDSA. 2 positions are modified to phosphothreonine: Thr101 and Thr333. The PARP alpha-helical domain occupies 242-370; sequence SEQLQALLLE…ETNLSKPNPP (129 aa). The 205-residue stretch at 369–573 folds into the PARP catalytic domain; the sequence is PPSLAKYRAL…FSMPGDQIKD (205 aa). A VIT domain is found at 607 to 735; sequence SSTKAGLQDA…KVLIKITYIT (129 aa). A VWFA domain is found at 876–1046; the sequence is EVIICLDCSS…KQIEDQMTRL (171 aa). Ser1236 carries the post-translational modification Phosphoserine. A Nuclear localization signal motif is present at residues 1237–1249; it reads KRKHRKIPFSKRK. A Phosphoserine modification is found at Ser1335. The interval 1408-1452 is disordered; it reads SAQSAPLQHPGGFTTRPSAGTFPELDSPQLHFSLPTDPDPIRGFG. Residue Arg1476 is modified to Asymmetric dimethylarginine. Phosphoserine is present on Ser1504. Residues 1562–1724 form an interaction with the major vault protein region; the sequence is VCIQHWQDAV…LHRVLHYSQG (163 aa).

This sequence belongs to the ARTD/PARP family. Component of the vault ribonucleoprotein particle, at least composed of MVP, PARP4 and one or more vault RNAs (vRNAs). Interacts with TEP1. In terms of tissue distribution, widely expressed; the highest levels are in the kidney; also detected in heart, placenta, lung, liver, skeletal muscle, spleen, leukocytes and pancreas.

The protein localises to the cytoplasm. The protein resides in the nucleus. Its subcellular location is the cytoskeleton. It is found in the spindle. The catalysed reaction is L-aspartyl-[protein] + NAD(+) = 4-O-(ADP-D-ribosyl)-L-aspartyl-[protein] + nicotinamide. It catalyses the reaction L-glutamyl-[protein] + NAD(+) = 5-O-(ADP-D-ribosyl)-L-glutamyl-[protein] + nicotinamide. Mono-ADP-ribosyltransferase that mediates mono-ADP-ribosylation of target proteins. The sequence is that of Protein mono-ADP-ribosyltransferase PARP4 from Homo sapiens (Human).